A 28-amino-acid polypeptide reads, in one-letter code: Chassatide C11 (28 aa).

Intrachain disulfides connect C3–C19, C7–C21, and C12–C26. Methionine sulfoxide; in form chassatide chaC11A is present on M16.

This sequence belongs to the cyclotide family. Bracelet subfamily. Expressed in fruit, pedicel and stem but not in leaf and root (at protein level).

Its function is as follows. Chassatide C11: Probably participates in a plant defense mechanism. Active against E.coli ATCC 25922 (MIC=8.5 uM) but not against S.aureus ATCC 12600 or S.epidermidis ATCC 14990. Has cytotoxic and hemolytic activity. Functionally, chassatide C11A: Probably participates in a plant defense mechanism. Has no activity against bacteria up to a concentration of 80 uM. Has no cytotoxic and no hemolytic activity. The chain is Chassatide C11 from Chassalia chartacea (Chassalia curviflora).